The chain runs to 546 residues: Alpha-isocomene synthase (546 aa).

Mg(2+) is bound by residues D299, D303, D443, and E451. A DDXXD motif motif is present at residues 299-303 (DDTYD).

It belongs to the terpene synthase family. Tpsa subfamily. Mg(2+) is required as a cofactor. It depends on Mn(2+) as a cofactor. In terms of tissue distribution, highly expressed in roots, lower levels in stems and leaves and detected in disk florets, but not in ray florets.

It catalyses the reaction (2E,6E)-farnesyl diphosphate = (-)-alpha-isocomene + diphosphate. The protein operates within secondary metabolite biosynthesis; terpenoid biosynthesis. Sesquiterpene synthase involved in the biosynthesis of alpha-isocomene as the major product and detectable amounts of beta-caryophyllene, beta-isocomene, silphinene and modeph-2-ene. Produces exclusively the (-)-(E)-beta caryophyllene enantiomer. The sequence is that of Alpha-isocomene synthase from Matricaria chamomilla var. recutita (German chamomile).